The chain runs to 62 residues: UPF0434 protein RSc2531 (62 aa).

It belongs to the UPF0434 family.

The chain is UPF0434 protein RSc2531 from Ralstonia nicotianae (strain ATCC BAA-1114 / GMI1000) (Ralstonia solanacearum).